Consider the following 42-residue polypeptide: GDWGTCSWPGQECEHDSDCCGSFCCVGRRCLHIYFPCNLSRS.

4 cysteine pairs are disulfide-bonded: Cys6-Cys20, Cys13-Cys25, Cys19-Cys30, and Cys24-Cys37.

Belongs to the conotoxin I1 superfamily. As to expression, expressed by the venom duct.

Its subcellular location is the secreted. In Conus aulicus (Princely cone), this protein is Conotoxin Au11.6.